Reading from the N-terminus, the 401-residue chain is Argininosuccinate synthase (401 aa).

8 to 16 (AYSGGLDTS) is an ATP binding site. L-citrulline is bound at residue tyrosine 87. An ATP-binding site is contributed by glycine 117. Threonine 119, asparagine 123, and aspartate 124 together coordinate L-aspartate. Asparagine 123 serves as a coordination point for L-citrulline. L-citrulline contacts are provided by arginine 127, serine 175, glutamate 259, and tyrosine 271.

Belongs to the argininosuccinate synthase family. Type 1 subfamily. As to quaternary structure, homotetramer.

It localises to the cytoplasm. It carries out the reaction L-citrulline + L-aspartate + ATP = 2-(N(omega)-L-arginino)succinate + AMP + diphosphate + H(+). It functions in the pathway amino-acid biosynthesis; L-arginine biosynthesis; L-arginine from L-ornithine and carbamoyl phosphate: step 2/3. The chain is Argininosuccinate synthase from Arthrobacter sp. (strain FB24).